A 387-amino-acid chain; its full sequence is Ferrochelatase (387 aa).

Positions 196 and 277 each coordinate Fe cation.

This sequence belongs to the ferrochelatase family.

The protein localises to the cytoplasm. The catalysed reaction is heme b + 2 H(+) = protoporphyrin IX + Fe(2+). The protein operates within porphyrin-containing compound metabolism; protoheme biosynthesis; protoheme from protoporphyrin-IX: step 1/1. Catalyzes the ferrous insertion into protoporphyrin IX. The chain is Ferrochelatase from Cyanothece sp. (strain PCC 7425 / ATCC 29141).